The primary structure comprises 517 residues: Cobyric acid synthase (517 aa).

The region spanning 253-453 is the GATase cobBQ-type domain; that stretch reads EVEIAVIKLP…IHGILDNDSL (201 aa). C334 acts as the Nucleophile in catalysis. H445 is an active-site residue.

The protein belongs to the CobB/CobQ family. CobQ subfamily.

It participates in cofactor biosynthesis; adenosylcobalamin biosynthesis. Its function is as follows. Catalyzes amidations at positions B, D, E, and G on adenosylcobyrinic A,C-diamide. NH(2) groups are provided by glutamine, and one molecule of ATP is hydrogenolyzed for each amidation. The sequence is that of Cobyric acid synthase from Moorella thermoacetica (strain ATCC 39073 / JCM 9320).